The following is a 219-amino-acid chain: Capsid protein (219 aa).

The segment at 5–29 (RRRRVVRRRKPVRRLRRRRRRFFKR) is nuclear localization signals.

Belongs to the circoviridae capsid protein family. As to quaternary structure, homomultimer. Assembles in the nucleus, presumably in an immature form, then migrates to the cytoplasm once assembled as mature virion. Interacts with Rep; this interaction relocates Rep into the nucleus.

The protein localises to the host nucleus. It localises to the virion. Its function is as follows. Self-assembles to form the virion icosahedral capsid with a T=1 symmetry. This very small capsid (17-22 nm in diameter) allows the virus to be very stable in the environment and resistant to some disinfectants, including detergents. Essential for the initial attachment to heparan sulfate moieties and chondroitin sulfate B of the host cell surface proteoglycans. After attachment, the virus is endocytosed and traffics to the nucleus. The capsid protein binds and transports the viral genome and Rep across the nuclear envelope. The protein is Capsid protein (Cap) of Homo sapiens (Human).